The sequence spans 387 residues: 3-hydroxyisobutyryl-CoA hydrolase-like protein 5 (387 aa).

Ala-2 is modified (N-acetylalanine).

This sequence belongs to the enoyl-CoA hydratase/isomerase family.

The chain is 3-hydroxyisobutyryl-CoA hydrolase-like protein 5 from Arabidopsis thaliana (Mouse-ear cress).